The following is a 443-amino-acid chain: Differentially expressed in FDCP 8 homolog A (443 aa).

The tract at residues 1–49 (MEYDDKLVRFRQGHLNPFDKQGGAERHPADSEAQPPKDSSTISPHSIPE) is disordered. 2 Phorbol-ester/DAG-type zinc fingers span residues 134 to 185 (EHRF…TKPC) and 364 to 424 (IHTT…STSC).

It belongs to the DEF8 family.

Positively regulates lysosome peripheral distribution and ruffled border formation in osteoclasts. Involved in bone resorption. This is Differentially expressed in FDCP 8 homolog A (def8-a) from Xenopus laevis (African clawed frog).